A 31-amino-acid polypeptide reads, in one-letter code: Photosystem II reaction center protein T (31 aa).

Met-1 carries the N-formylmethionine modification. Residues 3–23 (SVAYILVLTMALAVLFFAIAF) form a helical membrane-spanning segment.

This sequence belongs to the PsbT family. In terms of assembly, PSII is composed of 1 copy each of membrane proteins PsbA, PsbB, PsbC, PsbD, PsbE, PsbF, PsbH, PsbI, PsbJ, PsbK, PsbL, PsbM, PsbT, PsbX, PsbY, PsbZ, Psb30/Ycf12, peripheral proteins PsbO, CyanoQ (PsbQ), PsbU, PsbV and a large number of cofactors. It forms dimeric complexes.

The protein localises to the cellular thylakoid membrane. Its function is as follows. Found at the monomer-monomer interface of the photosystem II (PS II) dimer, plays a role in assembly and dimerization of PSII. PSII is a light-driven water plastoquinone oxidoreductase, using light energy to abstract electrons from H(2)O, generating a proton gradient subsequently used for ATP formation. This Synechocystis sp. (strain ATCC 27184 / PCC 6803 / Kazusa) protein is Photosystem II reaction center protein T.